The chain runs to 961 residues: Alanine--tRNA ligase, chloroplastic/mitochondrial (961 aa).

4 residues coordinate Zn(2+): His-641, His-645, Cys-743, and His-747.

Belongs to the class-II aminoacyl-tRNA synthetase family. As to quaternary structure, monomer. Zn(2+) is required as a cofactor.

It localises to the plastid. The protein resides in the chloroplast. The protein localises to the mitochondrion. It carries out the reaction tRNA(Ala) + L-alanine + ATP = L-alanyl-tRNA(Ala) + AMP + diphosphate. Functionally, catalyzes the attachment of alanine to tRNA(Ala) in a two-step reaction: alanine is first activated by ATP to form Ala-AMP and then transferred to the acceptor end of tRNA(Ala). Also edits incorrectly charged tRNA(Ala) via its editing domain. The chain is Alanine--tRNA ligase, chloroplastic/mitochondrial from Sorghum bicolor (Sorghum).